The primary structure comprises 622 residues: MRKQFVFLLPFLSRLYHVVIAGGERLTNGGFSPEINPFTPKASLVRYWNKQIHHQSPGSAFLLSKASPLTAVASATFAKLASENALPDRLPDFCSAANLFCFPDLGPTLEKHSNDVKFSVYDQRNFTNYGTIHPGGADSFKKYSQNGNAVTDSFRRYSRDAAGHEDKFTGYADNSNVVEEKFNSYGTSATGGSGDFKNYQSGVNNPTTRFKAYSDEGNGRAQTFKTYTHEANSGPGQSFTSYGKNGNGAPNEFSSYGVSSNVIGSDFSNYGENGNAANDTFKGYGGDGNVPQNNFKSYGASGNAAVDTFLNYRDNANVGDDSFSSYAKNSNFEKVDFVNYGKSINPGSESFSGYGKGAEGNKIDFKTYTQNSTFKDYTKTGVEFAKYNRSSLGGGKTVNKWVEPGKFFRESMLKEGTLIWMPDIKDKMPKRSFLPRSIVSKLPFSTSKIAEIKRVFHANDNSTMEGIITDAVRECERPPTVSETKRCVGSAEDMIDFATSVLGRSVVLRTTESVAGSKEKVMIGKVNGINGGRVTKSVSCHQSLYPYLLYYCHSVPKVRVYESDLLDPKSKAKINHGIAICHMDTSAWGANHGAFMLLGSRPGQIEVCHWIFENDMNWAIAD.

Residues 1–21 (MRKQFVFLLPFLSRLYHVVIA) form the signal peptide. Residues 118–121 (FSVY) form an FXXY 1 repeat. The N-linked (GlcNAc...) asparagine glycan is linked to asparagine 125. FXXY repeat units lie at residues 126–129 (FTNY), 140–143 (FKKY), 154–157 (FRRY), 168–171 (FTGY), 182–185 (FNSY), 196–199 (FKNY), 210–213 (FKAY), 224–227 (FKTY), 239–242 (FTSY), 253–256 (FSSY), and 267–270 (FSNY). Residue asparagine 278 is glycosylated (N-linked (GlcNAc...) asparagine). 7 FXXY repeats span residues 281–284 (FKGY), 295–298 (FKSY), 309–312 (FLNY), 323–326 (FSSY), 337–340 (FVNY), 351–354 (FSGY), and 365–368 (FKTY). Asparagine 371 carries N-linked (GlcNAc...) asparagine glycosylation. 2 FXXY repeats span residues 374-377 (FKDY) and 384-387 (FAKY). N-linked (GlcNAc...) asparagine glycosylation is found at asparagine 388 and asparagine 461. The BURP domain maps to 407 to 621 (FFRESMLKEG…FENDMNWAIA (215 aa)).

In terms of tissue distribution, expressed in flowers and stems.

The protein localises to the secreted. It is found in the extracellular space. Its subcellular location is the apoplast. It localises to the cell wall. Its function is as follows. Involved in cell size determination. The chain is Polygalacturonase 1 beta-like protein 1 from Arabidopsis thaliana (Mouse-ear cress).